A 454-amino-acid polypeptide reads, in one-letter code: Probable succinate-semialdehyde dehydrogenase [NADP(+)] (454 aa).

NADP(+) is bound by residues 130–131, 154–157, and 206–207; these read WN, KHAS, and GS. Glu-228 (proton acceptor) is an active-site residue. Residue Leu-229 participates in NADP(+) binding. Cys-262 serves as the catalytic Nucleophile. Glu-359 contributes to the NADP(+) binding site.

It belongs to the aldehyde dehydrogenase family.

The catalysed reaction is succinate semialdehyde + NADP(+) + H2O = succinate + NADPH + 2 H(+). It functions in the pathway amino-acid degradation; 4-aminobutanoate degradation. Functionally, catalyzes the NADP(+) dependent oxidation of succinate semialdehyde to succinate. This is Probable succinate-semialdehyde dehydrogenase [NADP(+)] (gabD) from Synechocystis sp. (strain ATCC 27184 / PCC 6803 / Kazusa).